We begin with the raw amino-acid sequence, 184 residues long: Adenine phosphoribosyltransferase (184 aa).

Belongs to the purine/pyrimidine phosphoribosyltransferase family. Homodimer.

It localises to the cytoplasm. The catalysed reaction is AMP + diphosphate = 5-phospho-alpha-D-ribose 1-diphosphate + adenine. It participates in purine metabolism; AMP biosynthesis via salvage pathway; AMP from adenine: step 1/1. Its function is as follows. Catalyzes a salvage reaction resulting in the formation of AMP, that is energically less costly than de novo synthesis. The protein is Adenine phosphoribosyltransferase of Blochmanniella pennsylvanica (strain BPEN).